A 312-amino-acid chain; its full sequence is tRNA dimethylallyltransferase (312 aa).

An ATP-binding site is contributed by Gly15–Ser22. Thr17–Ser22 contacts substrate. The interaction with substrate tRNA stretch occupies residues Asp40–Gln43.

Belongs to the IPP transferase family. Monomer. Requires Mg(2+) as cofactor.

The enzyme catalyses adenosine(37) in tRNA + dimethylallyl diphosphate = N(6)-dimethylallyladenosine(37) in tRNA + diphosphate. Catalyzes the transfer of a dimethylallyl group onto the adenine at position 37 in tRNAs that read codons beginning with uridine, leading to the formation of N6-(dimethylallyl)adenosine (i(6)A). This is tRNA dimethylallyltransferase from Streptomyces coelicolor (strain ATCC BAA-471 / A3(2) / M145).